The chain runs to 248 residues: MRLFPAIDLKEGKAVRLLQGRMEDATVYGEQPVEVARKFKEQGADSLHVVDLDGAFAGKPVNDAVILKLIQSSGLRVQVGGGIRTLERMEELLRLGVERVILGTVAVRTPELVEKAVQRFGEAVVIGIDAKDGLVAVQGWAEKTEIRALDLALRMKKVGVKHLVFTDISRDGMLQGPNIQSTVELARLSGLQVVASGGVSRLEDLRLLQEEAKRGVSLEGAIVGKALYTGAFSLAEALRVVGQRSEGK.

D8 (proton acceptor) is an active-site residue. D129 serves as the catalytic Proton donor.

The protein belongs to the HisA/HisF family.

The protein localises to the cytoplasm. It carries out the reaction 1-(5-phospho-beta-D-ribosyl)-5-[(5-phospho-beta-D-ribosylamino)methylideneamino]imidazole-4-carboxamide = 5-[(5-phospho-1-deoxy-D-ribulos-1-ylimino)methylamino]-1-(5-phospho-beta-D-ribosyl)imidazole-4-carboxamide. The protein operates within amino-acid biosynthesis; L-histidine biosynthesis; L-histidine from 5-phospho-alpha-D-ribose 1-diphosphate: step 4/9. The sequence is that of 1-(5-phosphoribosyl)-5-[(5-phosphoribosylamino)methylideneamino] imidazole-4-carboxamide isomerase from Desulfitobacterium hafniense (strain Y51).